Consider the following 464-residue polypeptide: Siroheme synthase (464 aa).

Residues 1 to 203 form a precorrin-2 dehydrogenase /sirohydrochlorin ferrochelatase region; sequence MEFLPLFHNL…GQGAEAERLL (203 aa). Residues 22 to 23 and 43 to 44 each bind NAD(+); these read EI and PE. The residue at position 128 (S128) is a Phosphoserine. The segment at 216–464 is uroporphyrinogen-III C-methyltransferase; it reads GEVYLVGAGP…AWFEGAQATV (249 aa). P225 provides a ligand contact to S-adenosyl-L-methionine. Catalysis depends on D248, which acts as the Proton acceptor. The active-site Proton donor is K270. Residues 301–303, I306, 331–332, M383, and G412 contribute to the S-adenosyl-L-methionine site; these read GGD and TA.

This sequence in the N-terminal section; belongs to the precorrin-2 dehydrogenase / sirohydrochlorin ferrochelatase family. It in the C-terminal section; belongs to the precorrin methyltransferase family.

It carries out the reaction uroporphyrinogen III + 2 S-adenosyl-L-methionine = precorrin-2 + 2 S-adenosyl-L-homocysteine + H(+). The enzyme catalyses precorrin-2 + NAD(+) = sirohydrochlorin + NADH + 2 H(+). It catalyses the reaction siroheme + 2 H(+) = sirohydrochlorin + Fe(2+). It participates in cofactor biosynthesis; adenosylcobalamin biosynthesis; precorrin-2 from uroporphyrinogen III: step 1/1. Its pathway is cofactor biosynthesis; adenosylcobalamin biosynthesis; sirohydrochlorin from precorrin-2: step 1/1. The protein operates within porphyrin-containing compound metabolism; siroheme biosynthesis; precorrin-2 from uroporphyrinogen III: step 1/1. It functions in the pathway porphyrin-containing compound metabolism; siroheme biosynthesis; siroheme from sirohydrochlorin: step 1/1. It participates in porphyrin-containing compound metabolism; siroheme biosynthesis; sirohydrochlorin from precorrin-2: step 1/1. In terms of biological role, multifunctional enzyme that catalyzes the SAM-dependent methylations of uroporphyrinogen III at position C-2 and C-7 to form precorrin-2 via precorrin-1. Then it catalyzes the NAD-dependent ring dehydrogenation of precorrin-2 to yield sirohydrochlorin. Finally, it catalyzes the ferrochelation of sirohydrochlorin to yield siroheme. In Pseudomonas savastanoi pv. phaseolicola (strain 1448A / Race 6) (Pseudomonas syringae pv. phaseolicola (strain 1448A / Race 6)), this protein is Siroheme synthase.